We begin with the raw amino-acid sequence, 482 residues long: Proton extrusion protein PxcA (482 aa).

A run of 4 helical transmembrane segments spans residues 265–285 (FVLG…NLVI), 359–379 (PLKN…YFVL), 406–426 (IIIL…WEVI), and 442–462 (FINM…KYWI).

The protein belongs to the CemA family.

The protein resides in the cell inner membrane. Required for H(+) efflux immediately after light irradiation to form a rapid H(+) concentration gradient across the thylakoid membranes. Together with PxcL, contributes to transient H(+) uptake following dark to light transition. In Acaryochloris marina (strain MBIC 11017), this protein is Proton extrusion protein PxcA.